A 344-amino-acid polypeptide reads, in one-letter code: L-rhamnose-proton symporter (344 aa).

Transmembrane regions (helical) follow at residues 4-24, 38-58, 68-88, 101-121, 137-157, 175-195, 214-234, 259-279, 290-310, and 323-343; these read AITMGIFWHLIGAASAACFYA, WSVGGIVSWIILPWAISALLL, FSLSTLLPVFLFGAMWGIGNI, MGIGIAIGITLIVGTLMTPII, TLLGVLVALIGVGIVTRAGQL, LVLAVMCGIFSAGMSFAMNAA, LPSYVVIMGGGAIINLGFCFI, VLLSALGGLMWYLQFFFYAWG, ISWMLHMSFYVLCGGIVGLVL, and VLSLGCVVIIVAANIVGMGMA.

Belongs to the L-rhamnose transporter (TC 2.A.7.6) family.

The protein localises to the cell inner membrane. The catalysed reaction is L-rhamnopyranose(in) + H(+)(in) = L-rhamnopyranose(out) + H(+)(out). Uptake of L-rhamnose across the cytoplasmic membrane with the concomitant transport of protons into the cell (symport system). This is L-rhamnose-proton symporter from Escherichia coli O157:H7.